A 376-amino-acid chain; its full sequence is Methionine import ATP-binding protein MetN 2 (376 aa).

The disordered stretch occupies residues 1 to 25 (MTATAQRQRPIDTTGAGQRAQQAEL). The 240-residue stretch at 34 to 273 (VRFINLGKTY…PQHEVSKTLL (240 aa)) folds into the ABC transporter domain. 70-77 (GRSGAGKS) is a binding site for ATP.

This sequence belongs to the ABC transporter superfamily. Methionine importer (TC 3.A.1.24) family. In terms of assembly, the complex is composed of two ATP-binding proteins (MetN), two transmembrane proteins (MetI) and a solute-binding protein (MetQ).

The protein localises to the cell inner membrane. It catalyses the reaction L-methionine(out) + ATP + H2O = L-methionine(in) + ADP + phosphate + H(+). It carries out the reaction D-methionine(out) + ATP + H2O = D-methionine(in) + ADP + phosphate + H(+). In terms of biological role, part of the ABC transporter complex MetNIQ involved in methionine import. Responsible for energy coupling to the transport system. The protein is Methionine import ATP-binding protein MetN 2 of Pseudomonas syringae pv. syringae (strain B728a).